Reading from the N-terminus, the 341-residue chain is Dihydroorotate dehydrogenase (quinone) (341 aa).

FMN contacts are provided by residues 61 to 65 and Thr85; that span reads AGLDK. Position 65 (Lys65) interacts with substrate. 110 to 114 contributes to the substrate binding site; that stretch reads NRMGF. Residues Asn138 and Asn171 each coordinate FMN. A substrate-binding site is contributed by Asn171. The active-site Nucleophile is Ser174. Asn176 contributes to the substrate binding site. Residues Lys216 and Thr244 each coordinate FMN. 245 to 246 is a binding site for substrate; the sequence is NT. Residues Gly267, Gly296, and 317–318 contribute to the FMN site; that span reads YS.

The protein belongs to the dihydroorotate dehydrogenase family. Type 2 subfamily. As to quaternary structure, monomer. FMN serves as cofactor.

The protein localises to the cell membrane. The enzyme catalyses (S)-dihydroorotate + a quinone = orotate + a quinol. It participates in pyrimidine metabolism; UMP biosynthesis via de novo pathway; orotate from (S)-dihydroorotate (quinone route): step 1/1. Its function is as follows. Catalyzes the conversion of dihydroorotate to orotate with quinone as electron acceptor. The protein is Dihydroorotate dehydrogenase (quinone) of Pseudomonas putida (strain GB-1).